The sequence spans 233 residues: Enolase-phosphatase E1 (233 aa).

It belongs to the HAD-like hydrolase superfamily. MasA/MtnC family. As to quaternary structure, monomer. It depends on Mg(2+) as a cofactor.

The catalysed reaction is 5-methylsulfanyl-2,3-dioxopentyl phosphate + H2O = 1,2-dihydroxy-5-(methylsulfanyl)pent-1-en-3-one + phosphate. The protein operates within amino-acid biosynthesis; L-methionine biosynthesis via salvage pathway; L-methionine from S-methyl-5-thio-alpha-D-ribose 1-phosphate: step 3/6. Its pathway is amino-acid biosynthesis; L-methionine biosynthesis via salvage pathway; L-methionine from S-methyl-5-thio-alpha-D-ribose 1-phosphate: step 4/6. In terms of biological role, bifunctional enzyme that catalyzes the enolization of 2,3-diketo-5-methylthiopentyl-1-phosphate (DK-MTP-1-P) into the intermediate 2-hydroxy-3-keto-5-methylthiopentenyl-1-phosphate (HK-MTPenyl-1-P), which is then dephosphorylated to form the acireductone 1,2-dihydroxy-3-keto-5-methylthiopentene (DHK-MTPene). The sequence is that of Enolase-phosphatase E1 from Hahella chejuensis (strain KCTC 2396).